The following is a 331-amino-acid chain: Bifunctional nuclease 1 (331 aa).

The region spanning 126–261 is the BFN domain; sequence CVQNNPRVLR…RIAYNNGLKV (136 aa). In terms of domain architecture, UVR spans 291–326; the sequence is EAQEFDLVRNMLVAAVEERYKDAAQYRDQLFMFRAK.

This sequence belongs to the bifunctional nuclease family.

The protein localises to the nucleus. Functionally, bifunctional nuclease with both RNase and DNase activities. Involved in basal defense response. Participates in abscisic acid-derived callose deposition following infection by a necrotrophic pathogen. The sequence is that of Bifunctional nuclease 1 (BBD1) from Oryza sativa subsp. indica (Rice).